Consider the following 342-residue polypeptide: Heat-inducible transcription repressor HrcA (342 aa).

The protein belongs to the HrcA family.

In terms of biological role, negative regulator of class I heat shock genes (grpE-dnaK-dnaJ and groELS operons). Prevents heat-shock induction of these operons. This chain is Heat-inducible transcription repressor HrcA, found in Shouchella clausii (strain KSM-K16) (Alkalihalobacillus clausii).